We begin with the raw amino-acid sequence, 197 residues long: 3-isopropylmalate dehydratase small subunit (197 aa).

The protein belongs to the LeuD family. LeuD type 1 subfamily. In terms of assembly, heterodimer of LeuC and LeuD.

The catalysed reaction is (2R,3S)-3-isopropylmalate = (2S)-2-isopropylmalate. Its pathway is amino-acid biosynthesis; L-leucine biosynthesis; L-leucine from 3-methyl-2-oxobutanoate: step 2/4. Functionally, catalyzes the isomerization between 2-isopropylmalate and 3-isopropylmalate, via the formation of 2-isopropylmaleate. The sequence is that of 3-isopropylmalate dehydratase small subunit from Geobacillus kaustophilus (strain HTA426).